The sequence spans 387 residues: Exodeoxyribonuclease 7 large subunit (387 aa).

This sequence belongs to the XseA family. As to quaternary structure, heterooligomer composed of large and small subunits.

The protein resides in the cytoplasm. The catalysed reaction is Exonucleolytic cleavage in either 5'- to 3'- or 3'- to 5'-direction to yield nucleoside 5'-phosphates.. Functionally, bidirectionally degrades single-stranded DNA into large acid-insoluble oligonucleotides, which are then degraded further into small acid-soluble oligonucleotides. In Synechococcus sp. (strain CC9605), this protein is Exodeoxyribonuclease 7 large subunit.